The chain runs to 273 residues: MNNRVHQGHLARKRFGQNFLNDRFVIDSIVSAINPQKGQAMVEIGPGLAALTEPVGERLDKLTVIELDRDLAARLQTHPFLGPKLTIYQQDAMTMNFGELSAQLGQPLRVFGNLPYNISTPLMFHLFSYTDAIADMHFMLQKEVVNRLVAGPNSKEYGRLSVMAQYYCQVIPVLEVPPSAFTPPPKVDSAVVRLVPHATMPYPVKDIRVLSRITTEAFNQRRKTIRNSLGNLFSVETLTEMGIDPAMRAENISVAQYCQMANYLSENAPLKES.

6 residues coordinate S-adenosyl-L-methionine: N18, L20, G45, E66, D91, and N113.

It belongs to the class I-like SAM-binding methyltransferase superfamily. rRNA adenine N(6)-methyltransferase family. RsmA subfamily.

The protein resides in the cytoplasm. The catalysed reaction is adenosine(1518)/adenosine(1519) in 16S rRNA + 4 S-adenosyl-L-methionine = N(6)-dimethyladenosine(1518)/N(6)-dimethyladenosine(1519) in 16S rRNA + 4 S-adenosyl-L-homocysteine + 4 H(+). Specifically dimethylates two adjacent adenosines (A1518 and A1519) in the loop of a conserved hairpin near the 3'-end of 16S rRNA in the 30S particle. May play a critical role in biogenesis of 30S subunits. The protein is Ribosomal RNA small subunit methyltransferase A of Salmonella typhimurium (strain LT2 / SGSC1412 / ATCC 700720).